A 464-amino-acid polypeptide reads, in one-letter code: Cyclin-dependent kinase 8 (464 aa).

The interaction with CCNC stretch occupies residues 1–15 (MDYDFKVKLSSERER). Residues 21-335 (EYEGCKVGRG…SEQAMQDPYF (315 aa)) enclose the Protein kinase domain. ATP-binding positions include 27–35 (VGRGTYGHV) and K52. D151 acts as the Proton acceptor in catalysis. The segment at 358–464 (FLTEEEPDEK…PQYSHQTHRY (107 aa)) is disordered. Positions 373 to 391 (QQQQQGNNHTNGTGHPGNQ) are enriched in low complexity. Composition is skewed to polar residues over residues 409–426 (PTTT…QRSN) and 436–464 (PSTS…THRY).

Belongs to the protein kinase superfamily. CMGC Ser/Thr protein kinase family. CDC2/CDKX subfamily. Component of the Mediator complex, which is composed of MED1, MED4, MED6, MED7, MED8, MED9, MED10, MED11, MED12, MED13, MED13L, MED14, MED15, MED16, MED17, MED18, MED19, MED20, MED21, MED22, MED23, MED24, MED25, MED26, MED27, MED29, MED30, MED31, CCNC, CDK8 and CDC2L6/CDK11. The MED12, MED13, CCNC and CDK8 subunits form a distinct module termed the CDK8 module. Mediator containing the CDK8 module is less active than Mediator lacking this module in supporting transcriptional activation. Individual preparations of the Mediator complex lacking one or more distinct subunits have been variously termed ARC, CRSP, DRIP, PC2, SMCC and TRAP. The cylin/CDK pair formed by CCNC/CDK8 also associates with the large subunit of RNA polymerase II. Interacts with CTNNB1, GLI3 and MAML1. It depends on Mg(2+) as a cofactor.

The protein resides in the nucleus. The enzyme catalyses L-seryl-[protein] + ATP = O-phospho-L-seryl-[protein] + ADP + H(+). It carries out the reaction L-threonyl-[protein] + ATP = O-phospho-L-threonyl-[protein] + ADP + H(+). The catalysed reaction is [DNA-directed RNA polymerase] + ATP = phospho-[DNA-directed RNA polymerase] + ADP + H(+). Component of the Mediator complex, a coactivator involved in regulated gene transcription of nearly all RNA polymerase II-dependent genes. Mediator functions as a bridge to convey information from gene-specific regulatory proteins to the basal RNA polymerase II transcription machinery. Mediator is recruited to promoters by direct interactions with regulatory proteins and serves as a scaffold for the assembly of a functional pre-initiation complex with RNA polymerase II and the general transcription factors. Phosphorylates the CTD (C-terminal domain) of the large subunit of RNA polymerase II (RNAp II), which may inhibit the formation of a transcription initiation complex. Phosphorylates CCNH leading to down-regulation of the TFIIH complex and transcriptional repression. Recruited through interaction with MAML1 to hyperphosphorylate the intracellular domain of NOTCH, leading to its degradation. In Mus musculus (Mouse), this protein is Cyclin-dependent kinase 8 (Cdk8).